Consider the following 305-residue polypeptide: UDP-3-O-acyl-N-acetylglucosamine deacetylase (305 aa).

H79, H238, and D242 together coordinate Zn(2+). Residue H265 is the Proton donor of the active site.

It belongs to the LpxC family. Requires Zn(2+) as cofactor.

It catalyses the reaction a UDP-3-O-[(3R)-3-hydroxyacyl]-N-acetyl-alpha-D-glucosamine + H2O = a UDP-3-O-[(3R)-3-hydroxyacyl]-alpha-D-glucosamine + acetate. It participates in glycolipid biosynthesis; lipid IV(A) biosynthesis; lipid IV(A) from (3R)-3-hydroxytetradecanoyl-[acyl-carrier-protein] and UDP-N-acetyl-alpha-D-glucosamine: step 2/6. Functionally, catalyzes the hydrolysis of UDP-3-O-myristoyl-N-acetylglucosamine to form UDP-3-O-myristoylglucosamine and acetate, the committed step in lipid A biosynthesis. The chain is UDP-3-O-acyl-N-acetylglucosamine deacetylase from Shewanella woodyi (strain ATCC 51908 / MS32).